The primary structure comprises 311 residues: Avirulence protein ATR1 (311 aa).

The N-terminal stretch at 1 to 15 (MRVCYFVLVPSVALA) is a signal peptide. Positions 48–62 (RALRAQTALDDDEER) match the RxLR-dEER motif. WY domain regions lie at residues 127–209 (DEAL…VKCV) and 210–311 (ESED…IYSV).

It belongs to the RxLR effector family. As to quaternary structure, monomer. Interacts with defense protein RPP1 from several ecotypes including RPP1-NdA, RPP1-WsB, RPP1-EstA and RPP1-ZdrA, via their leucine-rich repeats (LLRs).

Its subcellular location is the secreted. The protein localises to the host cytoplasm. Functionally, secreted effector that acts as an elicitor of hypersensitive response (HR) specifically on plants carrying both defense protein RPP1 from several ecotypes including RPP1-NdA, RPP1-WsB, RPP1-EstA and RPP1-ZdrA. The polypeptide is Avirulence protein ATR1 (Hyaloperonospora arabidopsidis (strain Emoy2) (Downy mildew agent)).